The following is a 2931-amino-acid chain: Probable polyketide synthase 9/36 (2931 aa).

Positions Glu11–Glu442 constitute a Ketosynthase family 3 (KS3) domain. Active-site for beta-ketoacyl synthase activity residues include Cys181, His323, and His362. Residues Gly635–Tyr668 are acyl/malonyl transferase. Ser645 acts as the For acyl/malonyl transferase activity in catalysis. The tract at residues Ile925–Asn1047 is N-terminal hotdog fold. The region spanning Ile925–Ser1209 is the PKS/mFAS DH domain. The Proton acceptor; for dehydratase activity role is filled by His959. The C-terminal hotdog fold stretch occupies residues Asn1064–Ser1209. Asp1122 acts as the Proton donor; for dehydratase activity in catalysis. The helical transmembrane segment at Leu2293 to Thr2313 threads the bilayer. The 78-residue stretch at Thr2429 to Leu2506 folds into the Carrier domain. An O-(pantetheine 4'-phosphoryl)serine modification is found at Ser2466. A helical membrane pass occupies residues Lys2553–Val2573.

Pantetheine 4'-phosphate serves as cofactor.

The protein resides in the membrane. Probable polyketide synthase. The chain is Probable polyketide synthase 9/36 (pks9) from Dictyostelium discoideum (Social amoeba).